The following is a 163-amino-acid chain: Crossover junction endodeoxyribonuclease RuvC (163 aa).

Catalysis depends on residues aspartate 7, glutamate 67, and aspartate 140. Mg(2+) is bound by residues aspartate 7, glutamate 67, and aspartate 140.

The protein belongs to the RuvC family. Homodimer which binds Holliday junction (HJ) DNA. The HJ becomes 2-fold symmetrical on binding to RuvC with unstacked arms; it has a different conformation from HJ DNA in complex with RuvA. In the full resolvosome a probable DNA-RuvA(4)-RuvB(12)-RuvC(2) complex forms which resolves the HJ. Mg(2+) serves as cofactor.

It localises to the cytoplasm. The enzyme catalyses Endonucleolytic cleavage at a junction such as a reciprocal single-stranded crossover between two homologous DNA duplexes (Holliday junction).. In terms of biological role, the RuvA-RuvB-RuvC complex processes Holliday junction (HJ) DNA during genetic recombination and DNA repair. Endonuclease that resolves HJ intermediates. Cleaves cruciform DNA by making single-stranded nicks across the HJ at symmetrical positions within the homologous arms, yielding a 5'-phosphate and a 3'-hydroxyl group; requires a central core of homology in the junction. The consensus cleavage sequence is 5'-(A/T)TT(C/G)-3'. Cleavage occurs on the 3'-side of the TT dinucleotide at the point of strand exchange. HJ branch migration catalyzed by RuvA-RuvB allows RuvC to scan DNA until it finds its consensus sequence, where it cleaves and resolves the cruciform DNA. The protein is Crossover junction endodeoxyribonuclease RuvC of Petrotoga mobilis (strain DSM 10674 / SJ95).